Here is a 72-residue protein sequence, read N- to C-terminus: Disintegrin batroxostatin (72 aa).

One can recognise a Disintegrin domain in the interval 1–72 (EAGEECDCGA…SADCPRNRFY (72 aa)). Disulfide bonds link Cys-6-Cys-21, Cys-8-Cys-16, Cys-15-Cys-38, Cys-29-Cys-35, Cys-34-Cys-59, and Cys-47-Cys-66. Positions 51–53 (RGD) match the Cell attachment site motif. A disordered region spans residues 52–72 (GDNPDDRCTGQSADCPRNRFY).

It belongs to the venom metalloproteinase (M12B) family. P-II subfamily. P-IIa sub-subfamily. In terms of assembly, monomer. As to expression, expressed by the venom gland.

Its subcellular location is the secreted. Its function is as follows. Inhibits fibrinogen interaction with platelets. Acts by binding to the glycoprotein IIb-IIIa receptor (ITGA2B/ITGB3) on the platelet surface and inhibits aggregation induced by ADP, thrombin, platelet-activating factor and collagen. Also inhibits T24 and SK-Mel-28 cell adhesion to fibronectin with IC(50) of 4.4 uM and 33 nM, respectively. In Bothrops atrox (Barba amarilla), this protein is Disintegrin batroxostatin.